The primary structure comprises 556 residues: Oxygen-dependent choline dehydrogenase (556 aa).

Asp-6–Glu-35 is an FAD binding site. The active-site Proton acceptor is His-475.

This sequence belongs to the GMC oxidoreductase family. It depends on FAD as a cofactor.

The enzyme catalyses choline + A = betaine aldehyde + AH2. It catalyses the reaction betaine aldehyde + NAD(+) + H2O = glycine betaine + NADH + 2 H(+). It participates in amine and polyamine biosynthesis; betaine biosynthesis via choline pathway; betaine aldehyde from choline (cytochrome c reductase route): step 1/1. Involved in the biosynthesis of the osmoprotectant glycine betaine. Catalyzes the oxidation of choline to betaine aldehyde and betaine aldehyde to glycine betaine at the same rate. This is Oxygen-dependent choline dehydrogenase from Xanthomonas axonopodis pv. citri (strain 306).